A 1233-amino-acid polypeptide reads, in one-letter code: Rho guanine nucleotide exchange factor 10-like protein (1233 aa).

Residues 1–10 are compositionally biased toward pro residues; it reads MASSNPPPQP. The disordered stretch occupies residues 1 to 93; that stretch reads MASSNPPPQP…GTGVPAWVSN (93 aa). The segment covering 26-46 has biased composition (acidic residues); it reads EAEDDPGEAFEFDDSDDEEDT. Position 40 is a phosphoserine (serine 40). Residues 72 to 89 are compositionally biased toward low complexity; sequence PVTDPDPAAAPPGTGVPA. 2 positions are modified to phosphotyrosine: tyrosine 131 and tyrosine 152. Residues 159-193 form a disordered region; the sequence is GAPRQAEDLGWSSSEFESYSEDSGEEAKPEVEPAK. Residues 183–193 are compositionally biased toward basic and acidic residues; that stretch reads EEAKPEVEPAK. Phosphoserine is present on serine 240. Positions 275-462 constitute a DH domain; sequence VRRHILGSIV…ETLAEKLNEQ (188 aa). Positions 1089 to 1104 are enriched in basic and acidic residues; it reads QEEAEGPRAEEEKPDG. 2 disordered regions span residues 1089–1117 and 1140–1161; these read QEEA…HVGR and PLLS…SEED.

As to quaternary structure, interacts with RHOA, RHOB and RHOC.

Its subcellular location is the cytoplasm. Acts as a guanine nucleotide exchange factor (GEF) for RHOA, RHOB and RHOC. This chain is Rho guanine nucleotide exchange factor 10-like protein (ARHGEF10L), found in Pongo abelii (Sumatran orangutan).